A 244-amino-acid polypeptide reads, in one-letter code: Eukaryotic translation initiation factor 4E type 1B (244 aa).

The span at M1–S26 shows a compositional bias: basic and acidic residues. Residues M1–P57 form a disordered region. The tract at residues H65–Q68 is EIF4EBP1/2/3 binding. MRNA is bound at residue W84 to Q85. Positions W101–S105 are EIF4EBP1/2/3 binding. W130–E131 contributes to the mRNA binding site. Positions E160 to G167 are EIF4EBP1/2/3 binding. Residues R185–K190 and A233–S235 contribute to the mRNA site.

It belongs to the eukaryotic initiation factor 4E family. As to quaternary structure, EIF4F is a multi-subunit complex, the composition of which varies with external and internal environmental conditions. It is composed of at least EIF4A, EIF4E and EIF4G.

In terms of biological role, recognizes and binds the 7-methylguanosine-containing mRNA cap during an early step in the initiation of protein synthesis and facilitates ribosome binding by inducing the unwinding of the mRNAs secondary structures. This chain is Eukaryotic translation initiation factor 4E type 1B (Eif4e1b), found in Mus musculus (Mouse).